The primary structure comprises 214 residues: MSGLFITFEGGEGAGKSTQIALLASHLRNHGFDPVITREPGGSPGAEAIRHVILSGNAETYGPAMEALLFAAARADHVDQLIRPALAEGRIVLCDRFIDSSRAYQGVTGNLDATYMAAIERIAIDGAMPDLTLVLDICAERGLSRAGKRRGSDTADRFEKEDIAVHEARRQAFLEIARQEPARCKLIDADRSQEKIADEIRSVVDTILTEKGLL.

10-17 lines the ATP pocket; that stretch reads GGEGAGKS.

It belongs to the thymidylate kinase family.

It carries out the reaction dTMP + ATP = dTDP + ADP. Its function is as follows. Phosphorylation of dTMP to form dTDP in both de novo and salvage pathways of dTTP synthesis. The polypeptide is Thymidylate kinase (Brucella suis (strain ATCC 23445 / NCTC 10510)).